Reading from the N-terminus, the 509-residue chain is Maturase K (509 aa).

This sequence belongs to the intron maturase 2 family. MatK subfamily.

It is found in the plastid. Its subcellular location is the chloroplast. Usually encoded in the trnK tRNA gene intron. Probably assists in splicing its own and other chloroplast group II introns. This chain is Maturase K, found in Austrocylindropuntia vestita (Cactus).